Consider the following 276-residue polypeptide: Rhomboid protease GlpG (276 aa).

The next 6 membrane-spanning stretches (helical) occupy residues 94–114, 142–162, 169–189, 192–212, 229–249, and 250–270; these read GPVTWVVMIACVVVFIAMQIL, ALMHFSLMHILFNLLWWWYLG, LGSGKLIVITLISALLSGYVQ, FSGPWFGGLSGVVYALMGYVW, LIIFALIWIIAGWFDLFGMSM, and ANGAHIAGLAVGLAMAFVDSL. Ser201 (nucleophile) is an active-site residue. The active site involves His254.

It belongs to the peptidase S54 family.

The protein resides in the cell inner membrane. The catalysed reaction is Cleaves type-1 transmembrane domains using a catalytic dyad composed of serine and histidine that are contributed by different transmembrane domains.. Functionally, rhomboid-type serine protease that catalyzes intramembrane proteolysis. The polypeptide is Rhomboid protease GlpG (Shigella boydii serotype 4 (strain Sb227)).